The sequence spans 442 residues: Septin-8 (442 aa).

Over residues 1–16 the composition is skewed to basic and acidic residues; that stretch reads MAATDLERVSSAEPEP. The tract at residues 1–23 is disordered; it reads MAATDLERVSSAEPEPRSLSLGG. Ala-2 is subject to N-acetylalanine. Ser-10 carries the post-translational modification Phosphoserine. The region spanning 41-307 is the Septin-type G domain; it reads QGFSFNILCV…ELYRRCKLEE (267 aa). Residues 51–58 form a G1 motif region; it reads GETGIGKS. Residues 51 to 58, Gly-106, 187 to 195, Gly-241, and Arg-256 each bind GTP; these read GETGIGKS and KADTISKSE. The tract at residues 103-106 is G3 motif; that stretch reads DAVG. The interval 186 to 189 is G4 motif; sequence AKAD. A coiled-coil region spans residues 322–410; the sequence is LQETYEAKRK…RKAAVEALQS (89 aa). Positions 377–391 are enriched in basic and acidic residues; sequence HQEEKRKVEEKRREL. The disordered stretch occupies residues 377–442; sequence HQEEKRKVEE…WSSIYSVTIP (66 aa). Polar residues-rich tracts occupy residues 408-420 and 432-442; these read LQSQALHATSQQP and GWSSIYSVTIP.

The protein belongs to the TRAFAC class TrmE-Era-EngA-EngB-Septin-like GTPase superfamily. Septin GTPase family. In terms of assembly, septins polymerize into heterooligomeric protein complexes that form filaments, and can associate with cellular membranes, actin filaments and microtubules. GTPase activity is required for filament formation. Interacts with CDK14, SEPTIN4, SEPTIN5 and SEPTIN7. Interacts with VAMP2; the interaction inhibits interaction of VAMP2 with SYP. Interacts with STX1A.

The protein resides in the cytoplasm. The protein localises to the cytoskeleton. Its subcellular location is the synapse. It is found in the cell projection. It localises to the axon. The protein resides in the cytoplasmic vesicle. The protein localises to the secretory vesicle. Its subcellular location is the synaptic vesicle membrane. It is found in the presynapse. Functionally, filament-forming cytoskeletal GTPase. May play a role in platelet secretion. Seems to participate in the process of SNARE complex formation in synaptic vesicles. The chain is Septin-8 from Otolemur garnettii (Small-eared galago).